The primary structure comprises 287 residues: POU domain class 2-associating factor 2 (287 aa).

Residues 10-32 form the OCA domain; it reads KRVYQGVRVKHTVKDLLAEKRSR. 3 disordered regions span residues 24 to 51, 161 to 199, and 247 to 279; these read DLLA…PPFI, TVPD…TQHR, and PKVG…MAWG. Polar residues-rich tracts occupy residues 33-49 and 180-199; these read QTSN…SQPP and LPPS…TQHR.

This sequence belongs to the POU2AF family. In terms of assembly, interacts with POU2F3 (via the POU domain) in a DNA-dependent manner; this interaction recruits POU2AF2 to chromatin and increases POU2F3 transactivation activity. In terms of tissue distribution, expressed in tuft cells of the small intestine, trachea, thymus, and colon.

The protein resides in the cytoplasm. It localises to the cytosol. The protein localises to the nucleus. Its function is as follows. Transcriptional coactivator of POU2F3. This complex drives the development of tuft cells, a rare chemosensory cells that coordinate immune and neural functions within mucosal epithelial tissues. This Mus musculus (Mouse) protein is POU domain class 2-associating factor 2.